Consider the following 132-residue polypeptide: UPF0299 membrane protein YohJ (132 aa).

Helical transmembrane passes span 7–27 (IIWQ…AGIF), 31–51 (LLPI…VLLA), 63–83 (GCYV…VGVM), and 93–113 (FGPV…VVSW).

This sequence belongs to the UPF0299 family.

It is found in the cell inner membrane. In Salmonella arizonae (strain ATCC BAA-731 / CDC346-86 / RSK2980), this protein is UPF0299 membrane protein YohJ.